A 102-amino-acid chain; its full sequence is Small ribosomal subunit protein uS10 (102 aa).

Belongs to the universal ribosomal protein uS10 family. In terms of assembly, part of the 30S ribosomal subunit.

Involved in the binding of tRNA to the ribosomes. The protein is Small ribosomal subunit protein uS10 of Levilactobacillus brevis (strain ATCC 367 / BCRC 12310 / CIP 105137 / JCM 1170 / LMG 11437 / NCIMB 947 / NCTC 947) (Lactobacillus brevis).